A 508-amino-acid chain; its full sequence is Hydroxymethylglutaryl-CoA synthase, mitochondrial (508 aa).

The transit peptide at 1 to 37 (MQRLLAPARRVLQVKRVMQESSLSPAHLLPAAQQRFS) directs the protein to the mitochondrion. Lys52 bears the N6-succinyllysine mark. (3S)-3-hydroxy-3-methylglutaryl-CoA is bound by residues Glu80 and Ala81. Residues Lys83 and Lys118 each carry the N6-acetyllysine; alternate modification. An N6-succinyllysine; alternate mark is found at Lys83 and Lys118. Residue Glu132 is the Proton donor/acceptor of the active site. Residues Cys166, Asn204, and Thr208 each contribute to the (3S)-3-hydroxy-3-methylglutaryl-CoA site. Cys166 acts as the Acyl-thioester intermediate in catalysis. An N6-succinyllysine modification is found at Lys221. Lys243 is modified (N6-acetyllysine). Lys256 carries the post-translational modification N6-acetyllysine; alternate. N6-succinyllysine; alternate is present on Lys256. Residues Ser258 and His301 each contribute to the (3S)-3-hydroxy-3-methylglutaryl-CoA site. Residue His301 is the Proton donor/acceptor of the active site. Lys306 is modified (N6-acetyllysine). A (3S)-3-hydroxy-3-methylglutaryl-CoA-binding site is contributed by Lys310. Lys310 and Lys327 each carry N6-acetyllysine; alternate. 2 positions are modified to N6-succinyllysine; alternate: Lys310 and Lys327. Lys333 carries the post-translational modification N6-succinyllysine. N6-acetyllysine; alternate occurs at positions 342, 350, 354, and 358. Lys342, Lys350, Lys354, and Lys358 each carry N6-succinyllysine; alternate. Positions 380 and 414 each coordinate (3S)-3-hydroxy-3-methylglutaryl-CoA. At Lys427 the chain carries N6-acetyllysine. Ser433 is modified (phosphoserine). Residue Lys437 is modified to N6-acetyllysine. Ser440 bears the Phosphoserine mark. N6-acetyllysine; alternate is present on Lys447. Position 447 is an N6-succinyllysine; alternate (Lys447). Ser456 is modified (phosphoserine). Residue Lys473 is modified to N6-acetyllysine; alternate. Lys473 is modified (N6-succinyllysine; alternate). A Phosphoserine modification is found at Ser477.

The protein belongs to the thiolase-like superfamily. HMG-CoA synthase family. Homodimer. Post-translationally, succinylated. Desuccinylated by SIRT5. Succinylation, at least at Lys-83 and Lys-310, inhibits the enzymatic activity. Liver and kidney.

It is found in the mitochondrion. It catalyses the reaction acetoacetyl-CoA + acetyl-CoA + H2O = (3S)-3-hydroxy-3-methylglutaryl-CoA + CoA + H(+). The protein operates within metabolic intermediate biosynthesis; (R)-mevalonate biosynthesis; (R)-mevalonate from acetyl-CoA: step 2/3. Functionally, catalyzes the first irreversible step in ketogenesis, condensing acetyl-CoA to acetoacetyl-CoA to form HMG-CoA, which is converted by HMG-CoA reductase (HMGCR) into mevalonate. The protein is Hydroxymethylglutaryl-CoA synthase, mitochondrial (Hmgcs2) of Rattus norvegicus (Rat).